The sequence spans 314 residues: Homeobox protein SIX3 (314 aa).

The segment at residues 188-247 (GEQKTHCFKERTRSLLREWYLQDPYPNPSKKRELAQATGLTPTQVGNWFKNRRQRDRAAA) is a DNA-binding region (homeobox). 2 disordered regions span residues 214 to 233 (NPSK…TQVG) and 240 to 314 (RQRD…ECDV). The span at 271 to 293 (PTHSSAESPSTAASPTTSVSSLT) shows a compositional bias: low complexity. The segment covering 298–314 (TGTSILSVTSSDSECDV) has biased composition (polar residues).

The protein belongs to the SIX/Sine oculis homeobox family.

It is found in the nucleus. In terms of biological role, transcriptional regulator which can act as both a transcriptional repressor and activator by binding a ATTA homeodomain core recognition sequence on these target genes. During forebrain development represses WNT1 expression allowing zona limitans intrathalamica formation and thereby ensuring proper anterio-posterior patterning of the diencephalon and formation of the rostral diencephalon. Acts as a direct upstream activator of SHH expression in the rostral diencephalon ventral midline and that in turn SHH maintains its expression. In addition, Six3 activity is required for the formation of the telencephalon. During postnatal stages of brain development is necessary for ependymal cell maturation by promoting the maturation of radial glia into ependymal cells through regulation of neuroblast proliferation and migration. Acts on the proliferation and differentiation of neural progenitor cells through activating transcription of CCND1 and CCND2. During early lens formation plays a role in lens induction and specification by activating directly PAX6 in the presumptive lens ectoderm. In turn PAX6 activates SIX3 resulting in activation of PDGFRA and CCND1 promoting cell proliferation. Also is required for the neuroretina development by directly suppressing WNT8B expression in the anterior neural plate territory. Its action during retina development and lens morphogenesis is AES and TLE4-dependent manner. Furthermore, during eye development regulates several genes expression. Before and during early lens development represses the CRYGF promoter by binding a SIX repressor element. Directly activates RHO transcription, or cooperates with CRX or NRL. Six3 also functions in the formation of the proximodistal axis of the optic cup, and promotes the formation of optic vesicles-like structures. During pituitary development, acts in parallel or alternatively with HESX1 to control cell proliferation through Wnt/beta-catenin pathway. Plays a role in eye development by suppressing WNT1 expression and in dorsal-ventral patterning by repressing BMP signaling pathway. This is Homeobox protein SIX3 (SIX3) from Gallus gallus (Chicken).